The chain runs to 287 residues: Pyridoxal kinase PdxY (287 aa).

Residues Ser9 and 44-45 (TQ) contribute to the substrate site. ATP is bound by residues Asp111, Glu147, and Lys180. Asp221 contributes to the substrate binding site.

This sequence belongs to the pyridoxine kinase family. PdxY subfamily. As to quaternary structure, homodimer. Mg(2+) serves as cofactor.

It catalyses the reaction pyridoxal + ATP = pyridoxal 5'-phosphate + ADP + H(+). Its pathway is cofactor metabolism; pyridoxal 5'-phosphate salvage; pyridoxal 5'-phosphate from pyridoxal: step 1/1. Pyridoxal kinase involved in the salvage pathway of pyridoxal 5'-phosphate (PLP). Catalyzes the phosphorylation of pyridoxal to PLP. In Paraburkholderia phymatum (strain DSM 17167 / CIP 108236 / LMG 21445 / STM815) (Burkholderia phymatum), this protein is Pyridoxal kinase PdxY.